Reading from the N-terminus, the 609-residue chain is Glutamine--fructose-6-phosphate aminotransferase [isomerizing] (609 aa).

C2 acts as the Nucleophile; for GATase activity in catalysis. The 218-residue stretch at 2 to 219 folds into the Glutamine amidotransferase type-2 domain; the sequence is CGIVAAVTQR…EGDIAIVARK (218 aa). 2 consecutive SIS domains span residues 288-428 and 460-599; these read ENNI…SKKE and MANT…IDQP. Catalysis depends on K604, which acts as the For Fru-6P isomerization activity.

Homodimer.

It is found in the cytoplasm. It catalyses the reaction D-fructose 6-phosphate + L-glutamine = D-glucosamine 6-phosphate + L-glutamate. Catalyzes the first step in hexosamine metabolism, converting fructose-6P into glucosamine-6P using glutamine as a nitrogen source. This is Glutamine--fructose-6-phosphate aminotransferase [isomerizing] from Buchnera aphidicola subsp. Acyrthosiphon pisum (strain APS) (Acyrthosiphon pisum symbiotic bacterium).